Here is a 585-residue protein sequence, read N- to C-terminus: MNIFADFDARIKKTLQDIDLKPKDGGDLDLSRIGVEPPRDSSHGDIATNAAMVLSKAVGQNPRELAGRIAEALASDADVETVDVAGPGFINLRLKATYWQRELSAMLNEGKDFGRSKLGAGSKVNVEYVSANPTGPMHVGHCRGAVVGDVLANLLKFAGYDVVKEYYINDAGAQIDVLARSVMLRYREALGENIGEIPSGLYPGDYLVPVGQELAKEFGSKLLEMPEAEALALVKDRTIDAMMAMIRADLDALNVHHDVFFSERKLHVDHARAIRNAINDLTLKGHVYKGKLPPPKGQLPEDWEDREQTLFRSTEVGDDIDRPLMKSDGAFTYFAGDVAYFKDKYDRGFNEMIYVLGADHGGYVKRLEAVARAVSDGKAKLTVLLCQLVKLFRDGEPVRMSKRSGEFITLRDVVDEVGRDPVRFMMLYRKNDAPLDFDFAKVTEQSKDNPVFYVQYASARCHSVFRQAADQLGLADLDRVGMAAHFDKLTDESEIALVRKLAEYPRLIEAAAIHQEPHRLAFYLYDLASAFHSQWNRGTENPDLRFIKVNDPDLSLARLGLVQVVSDVLTSGLTIIGADAPTEMR.

Residues 131 to 141 (ANPTGPMHVGH) carry the 'HIGH' region motif.

It belongs to the class-I aminoacyl-tRNA synthetase family. Monomer.

Its subcellular location is the cytoplasm. The enzyme catalyses tRNA(Arg) + L-arginine + ATP = L-arginyl-tRNA(Arg) + AMP + diphosphate. In Brucella anthropi (strain ATCC 49188 / DSM 6882 / CCUG 24695 / JCM 21032 / LMG 3331 / NBRC 15819 / NCTC 12168 / Alc 37) (Ochrobactrum anthropi), this protein is Arginine--tRNA ligase.